The sequence spans 394 residues: Actin-related protein 2-A (394 aa).

ATP is bound by residues 160-162 (GDG), 214-218 (RMMKE), and 305-310 (GGSTMY).

The protein belongs to the actin family. ARP2 subfamily. As to quaternary structure, component of the Arp2/3 complex composed of actr2/arp2, actr3/arp3, arpc1b, arpc2, arpc3, arpc4 and arpc5.

The protein localises to the cytoplasm. It is found in the cytoskeleton. It localises to the cell projection. The protein resides in the nucleus. In terms of biological role, ATP-binding component of the Arp2/3 complex, a multiprotein complex that mediates actin polymerization upon stimulation by nucleation-promoting factor (NPF). The Arp2/3 complex mediates the formation of branched actin networks in the cytoplasm, providing the force for cell motility. Seems to contact the pointed end of the daughter actin filament. In addition to its role in the cytoplasmic cytoskeleton, the Arp2/3 complex also promotes actin polymerization in the nucleus, thereby regulating gene transcription and repair of damaged DNA. The Arp2/3 complex promotes homologous recombination (HR) repair in response to DNA damage by promoting nuclear actin polymerization, leading to drive motility of double-strand breaks (DSBs). This Danio rerio (Zebrafish) protein is Actin-related protein 2-A (actr2a).